The primary structure comprises 156 residues: Cyanate hydratase (156 aa).

Active-site residues include arginine 96, glutamate 99, and serine 122.

The protein belongs to the cyanase family.

It carries out the reaction cyanate + hydrogencarbonate + 3 H(+) = NH4(+) + 2 CO2. In terms of biological role, catalyzes the reaction of cyanate with bicarbonate to produce ammonia and carbon dioxide. The chain is Cyanate hydratase from Burkholderia vietnamiensis (strain G4 / LMG 22486) (Burkholderia cepacia (strain R1808)).